The following is a 312-amino-acid chain: Bifunctional pinoresinol-lariciresinol reductase 2 (312 aa).

NADP(+) is bound by residues 11 to 17 (GGTGYIG), Arg-36, and Lys-45. The active-site Proton acceptor is the Lys-138. Arg-142 lines the NADP(+) pocket. Residue His-270 participates in substrate binding.

Belongs to the NmrA-type oxidoreductase family. Isoflavone reductase subfamily. As to quaternary structure, dimer.

The catalysed reaction is (+)-lariciresinol + NADP(+) = (+)-pinoresinol + NADPH + H(+). It carries out the reaction (-)-secoisolariciresinol + NADP(+) = (+)-lariciresinol + NADPH + H(+). It catalyses the reaction (-)-lariciresinol + NADP(+) = (-)-pinoresinol + NADPH + H(+). Its function is as follows. Reductase involved in lignan biosynthesis. Catalyzes the enantioselective sequential conversion of (+)-pinoresinol into (+)-lariciresinol and of (+)-lariciresinol into (-)-secoisolariciresinol. Can also convert with a lower efficiency (-)-pinoresinol into (-)-lariciresinol, but not (-)-lariciresinol into (+)-secoisolariciresinol. Abstracts the 4R-hydride from the NADPH cofactor during catalysis. The chain is Bifunctional pinoresinol-lariciresinol reductase 2 (PLR_Tp2) from Thuja plicata (Western red-cedar).